We begin with the raw amino-acid sequence, 495 residues long: Nuclear receptor subfamily 6 group A member 1 (495 aa).

Residues 1 to 34 (MERDERPPSGGGGGGGSAGFLEPPAALPPPPRNG) form a disordered region. Over residues 9–18 (SGGGGGGGSA) the composition is skewed to gly residues. A DNA-binding region (nuclear receptor) is located at residues 72 to 147 (QRTCLICGDR…MGMNRKAIRE (76 aa)). The Zn(2+) site is built by Cys75, Cys78, Cys92, Cys95, Cys111, Cys117, Cys127, and Cys130. NR C4-type zinc fingers lie at residues 75–95 (CLIC…CEGC) and 111–135 (CSRD…LLKC). Disordered regions lie at residues 145–165 (IRED…QISE) and 177–214 (FEEE…LSSS). Over residues 180 to 192 (EANHWSNHGDSDH) the composition is skewed to basic and acidic residues. The interval 187-268 (HGDSDHSSPG…RSLDPQSYSL (82 aa)) is sufficient for interaction with UIMC1. Positions 202-214 (SNQPSPGSTLSSS) are enriched in low complexity. The 232-residue stretch at 264-495 (QSYSLIHQLM…HSCKTSTVKE (232 aa)) folds into the NR LBD domain.

It belongs to the nuclear hormone receptor family. NR6 subfamily. Homodimer. Interacts with UIMC1. Expressed in the germ cells of both the adult testis and ovary, being most abundant in spermatids.

It localises to the nucleus. Orphan nuclear receptor that binds to a response element containing the sequence 5'-TCAAGGTCA-3'. Acts as a regulator of embryonic stem cell pluripotency by mediating repression of POU5F1/OCT4: binds to the DR0 element within the POU5F1/OCT4 promoter and inhibits POU5F1/OCT4 expression during embryonic stem cell differentiation. Required to restrict POU5F1/OCT4 expression to the germ cell lineage. Involved in the regulation of gene expression in germ cell development during gametogenesis. This chain is Nuclear receptor subfamily 6 group A member 1 (Nr6a1), found in Mus musculus (Mouse).